The following is a 335-amino-acid chain: uncharacterized protein (335 aa).

4 helical membrane passes run 104–124, 128–148, 280–300, and 310–330; these read FKKV…MGLL, LLQG…LSLF, LAFG…TMIG, and TINL…GIFV.

Its subcellular location is the cell membrane. This is an uncharacterized protein from Methanocaldococcus jannaschii (strain ATCC 43067 / DSM 2661 / JAL-1 / JCM 10045 / NBRC 100440) (Methanococcus jannaschii).